We begin with the raw amino-acid sequence, 82 residues long: Delta-actitoxin-Aeq2b 3 (82 aa).

A signal peptide spans 1–19 (MNRLMILVFAAVILALASA). A propeptide spanning residues 20–26 (DEDVDIT) is cleaved from the precursor. 3 cysteine pairs are disulfide-bonded: Cys-32–Cys-79, Cys-34–Cys-69, and Cys-62–Cys-80.

Belongs to the sea anemone sodium channel inhibitory toxin family. Type I subfamily.

It is found in the secreted. Its subcellular location is the nematocyst. In terms of biological role, binds specifically to voltage-gated sodium channels (Nav), thereby delaying their inactivation during signal transduction. Causes death to crabs. The protein is Delta-actitoxin-Aeq2b 3 of Actinia equina (Beadlet anemone).